The sequence spans 1394 residues: ATP-dependent permease AUS1 (1394 aa).

Topologically, residues 1-420 are cytoplasmic; that stretch reads MSISKYFTPV…PLTTIGSYSR (420 aa). One can recognise an ABC transporter 1 domain in the interval 33–273; it reads KKSYDAEDSM…FRDTLGIEKD (241 aa). Helical transmembrane passes span 421-443, 468-490, 497-519, 529-551, 558-575, and 636-658; these read GSLT…PIAF, TVFD…YFLA, ARFF…LFAL, VANL…VIYL, FVWI…EAIL, and VWRN…LFAS. Topologically, residues 659–1080 are cytoplasmic; the sequence is QYIKPYFNKD…QYICTKRDMT (422 aa). In terms of domain architecture, ABC transporter 2 spans 751–978; sequence ISWKNINYTV…YFMSHDNTLV (228 aa). 782–789 is a binding site for ATP; that stretch reads GESGAGKT. A run of 6 helical transmembrane segments spans residues 1081–1103, 1107–1129, 1156–1178, 1193–1215, 1224–1246, and 1346–1368; these read YVMA…FWHI, IIGL…PLIN, VLLL…LFFV, AGVF…LWLI, AAVF…QPYS, and FGIE…YLTY. Topologically, residues 1369 to 1394 are cytoplasmic; sequence VARIWPKVFKIITKVIPHRGKKPVQN.

Belongs to the ABC transporter superfamily. ABCG family. PDR (TC 3.A.1.205) subfamily.

It localises to the membrane. Transporter involved in the uptake of sterol. This is ATP-dependent permease AUS1 (AUS1) from Saccharomyces cerevisiae (strain ATCC 204508 / S288c) (Baker's yeast).